Consider the following 270-residue polypeptide: Shikimate dehydrogenase (NADP(+)) (270 aa).

Residues 15 to 17 and T62 contribute to the shikimate site; that span reads SKS. The active-site Proton acceptor is the K66. Residue D78 coordinates NADP(+). Shikimate contacts are provided by N87 and D103. NADP(+) contacts are provided by residues 128–132, 152–157, and L213; these read GAGGA and NRTVDR. Residue Y215 coordinates shikimate. G237 provides a ligand contact to NADP(+).

It belongs to the shikimate dehydrogenase family. As to quaternary structure, homodimer.

It catalyses the reaction shikimate + NADP(+) = 3-dehydroshikimate + NADPH + H(+). The protein operates within metabolic intermediate biosynthesis; chorismate biosynthesis; chorismate from D-erythrose 4-phosphate and phosphoenolpyruvate: step 4/7. Functionally, involved in the biosynthesis of the chorismate, which leads to the biosynthesis of aromatic amino acids. Catalyzes the reversible NADPH linked reduction of 3-dehydroshikimate (DHSA) to yield shikimate (SA). This Halorhodospira halophila (strain DSM 244 / SL1) (Ectothiorhodospira halophila (strain DSM 244 / SL1)) protein is Shikimate dehydrogenase (NADP(+)).